The following is a 328-amino-acid chain: Putative potassium channel protein YugO (328 aa).

Helical transmembrane passes span 19–39 (IGVI…ILEP), 42–62 (FTSV…VGYG), and 73–93 (AAGI…FATL). An RCK N-terminal domain is found at 114–238 (RDHIILIGWN…ERAGANQIIG (125 aa)).

The protein resides in the cell membrane. The polypeptide is Putative potassium channel protein YugO (yugO) (Bacillus subtilis (strain 168)).